A 636-amino-acid chain; its full sequence is Poly(3-hydroxyalkanoate) polymerase subunit PhaC (636 aa).

Disordered regions lie at residues 1–38 and 129–152; these read MYNKRIKRVLPPEEMVTDSKQESGGQKNGDKTGFDATD and QGTRGMQGEPLPPEPDTRKDKRFS. The span at 143-152 shows a compositional bias: basic and acidic residues; it reads PDTRKDKRFS. The active site involves Cys373.

It belongs to the PHA/PHB synthase family. Type I PhaC subfamily.

The protein resides in the cytoplasm. It catalyses the reaction (3R)-3-hydroxybutanoyl-CoA + [(3R)-hydroxybutanoate](n) = [(3R)-hydroxybutanoate](n+1) + CoA. It participates in biopolymer metabolism; poly-(R)-3-hydroxybutanoate biosynthesis. Its function is as follows. Polymerizes D(-)-3-hydroxybutyryl-CoA to create PHB which consists of thousands of hydroxybutyrate molecules linked end to end. PHB serves as an intracellular energy reserve material when cells grow under conditions of nutrient limitation. This Rhizobium etli (strain ATCC 51251 / DSM 11541 / JCM 21823 / NBRC 15573 / CFN 42) protein is Poly(3-hydroxyalkanoate) polymerase subunit PhaC.